The sequence spans 121 residues: Protein MGF 110-14L (121 aa).

Residues 1-17 (MKVLLGLLLGYSVLILA) form the signal peptide.

The protein belongs to the asfivirus MGF 110 family.

This chain is Protein MGF 110-14L, found in African swine fever virus (isolate Portugal/Lis 57/1957) (ASFV).